Here is a 558-residue protein sequence, read N- to C-terminus: Dihydroxy-acid dehydratase (558 aa).

Asp-78 is a binding site for Mg(2+). Cys-119 contributes to the [2Fe-2S] cluster binding site. The Mg(2+) site is built by Asp-120 and Lys-121. Position 121 is an N6-carboxylysine (Lys-121). Cys-192 provides a ligand contact to [2Fe-2S] cluster. Mg(2+) is bound at residue Glu-446. The active-site Proton acceptor is the Ser-472.

This sequence belongs to the IlvD/Edd family. In terms of assembly, homodimer. [2Fe-2S] cluster serves as cofactor. The cofactor is Mg(2+).

It carries out the reaction (2R)-2,3-dihydroxy-3-methylbutanoate = 3-methyl-2-oxobutanoate + H2O. The enzyme catalyses (2R,3R)-2,3-dihydroxy-3-methylpentanoate = (S)-3-methyl-2-oxopentanoate + H2O. The protein operates within amino-acid biosynthesis; L-isoleucine biosynthesis; L-isoleucine from 2-oxobutanoate: step 3/4. It participates in amino-acid biosynthesis; L-valine biosynthesis; L-valine from pyruvate: step 3/4. Functions in the biosynthesis of branched-chain amino acids. Catalyzes the dehydration of (2R,3R)-2,3-dihydroxy-3-methylpentanoate (2,3-dihydroxy-3-methylvalerate) into 2-oxo-3-methylpentanoate (2-oxo-3-methylvalerate) and of (2R)-2,3-dihydroxy-3-methylbutanoate (2,3-dihydroxyisovalerate) into 2-oxo-3-methylbutanoate (2-oxoisovalerate), the penultimate precursor to L-isoleucine and L-valine, respectively. In Campylobacter lari (strain RM2100 / D67 / ATCC BAA-1060), this protein is Dihydroxy-acid dehydratase.